Here is a 312-residue protein sequence, read N- to C-terminus: Gamma-soluble NSF attachment protein (312 aa).

The interval 281 to 312 (KKKSPATPQAKPDGAAGMAAEEEEDEYSGGLC) is disordered. S284 is modified (phosphoserine). The residue at position 287 (T287) is a Phosphothreonine. Residues 300–312 (AEEEEDEYSGGLC) show a composition bias toward acidic residues. A Phosphoserine modification is found at S308.

It belongs to the SNAP family. In terms of assembly, interacts with RAB11FIP5. Interacts with VTI1A. In terms of tissue distribution, abundantly expressed in the heart, liver and kidneys with lower expression in the brain, spleen, lung, muscle and testes.

It is found in the membrane. The protein localises to the golgi apparatus. Its function is as follows. Required for vesicular transport between the endoplasmic reticulum and the Golgi apparatus. This Mus musculus (Mouse) protein is Gamma-soluble NSF attachment protein.